The following is a 679-amino-acid chain: DNA ligase (679 aa).

NAD(+)-binding positions include 43-47, 92-93, and Glu124; these read DYVYD and SM. Lys126 functions as the N6-AMP-lysine intermediate in the catalytic mechanism. The NAD(+) site is built by Arg147, Glu181, Lys297, and Lys321. 4 residues coordinate Zn(2+): Cys415, Cys418, Cys433, and Cys438. The region spanning 599-679 is the BRCT domain; that stretch reads TESAEWAGKR…RFDQAMKEEN (81 aa).

The protein belongs to the NAD-dependent DNA ligase family. LigA subfamily. The cofactor is Mg(2+). Mn(2+) serves as cofactor.

It carries out the reaction NAD(+) + (deoxyribonucleotide)n-3'-hydroxyl + 5'-phospho-(deoxyribonucleotide)m = (deoxyribonucleotide)n+m + AMP + beta-nicotinamide D-nucleotide.. Functionally, DNA ligase that catalyzes the formation of phosphodiester linkages between 5'-phosphoryl and 3'-hydroxyl groups in double-stranded DNA using NAD as a coenzyme and as the energy source for the reaction. It is essential for DNA replication and repair of damaged DNA. This Limosilactobacillus fermentum (strain NBRC 3956 / LMG 18251) (Lactobacillus fermentum) protein is DNA ligase.